The primary structure comprises 296 residues: Small ribosomal subunit biogenesis GTPase RsgA (296 aa).

The 159-residue stretch at 65–223 (INRIGRPAVA…LADTPGFSSI (159 aa)) folds into the CP-type G domain. GTP contacts are provided by residues 114–117 (SKAD) and 166–174 (GQSGAGKST). Cysteine 247, cysteine 252, histidine 254, and cysteine 260 together coordinate Zn(2+).

Belongs to the TRAFAC class YlqF/YawG GTPase family. RsgA subfamily. In terms of assembly, monomer. Associates with 30S ribosomal subunit, binds 16S rRNA. Zn(2+) is required as a cofactor.

The protein localises to the cytoplasm. Its function is as follows. One of several proteins that assist in the late maturation steps of the functional core of the 30S ribosomal subunit. Helps release RbfA from mature subunits. May play a role in the assembly of ribosomal proteins into the subunit. Circularly permuted GTPase that catalyzes slow GTP hydrolysis, GTPase activity is stimulated by the 30S ribosomal subunit. The sequence is that of Small ribosomal subunit biogenesis GTPase RsgA from Lactobacillus acidophilus (strain ATCC 700396 / NCK56 / N2 / NCFM).